A 559-amino-acid chain; its full sequence is MRYKFMGDSLSIRNEKAFEAALQALRRHATKDGVYDIRRHFVEDEQRFSHFSLRLDDLLFDFSKCGITFKTLQLLDDLAVAADVLGRREAMFSGKAINTTEKRSVLHIALRMPTDEVFMLDGHDLVRDIQDVLAHMERFSEMVRDGSYKGNTGEKIINIVNIGIGGSDLGPAMVTHALKPYHDGPHCHFVSNADTAHISDTLSVLNPATTLFIIASKTFTTAETIANAQVARQWIISHLGEEAVCRHFVAVSSALDKVAEFGIDSSRIFKFWDWVGGRYSIWSAIGLVVMLAIGGQNFRQFLNGAQQMDRHFKIAPLHKNIPIRFALLGFWHRVVCGYASRAIIPYAQRLARFPAYLQQLDMESNGKQVSLDGKTLNFSSGPVVWGDSGTNGQHAFFQLLHQGTDVIPVEFILFIKGHEQNLHPMYDILVANCLAQSKALMKGRSVEDVRRILVKSGIDVHETEKLALHKSFEGNRPSIMLVQDLLTPFTLGRLIALYEHRIFVEGILMNINSFDQWGVEFGKELANELLPILRGENKANNRDSSTLGLLAYIQARREE.

The active-site Proton donor is glutamate 363. Residues histidine 394 and lysine 523 contribute to the active site.

Belongs to the GPI family.

The protein resides in the cytoplasm. The enzyme catalyses alpha-D-glucose 6-phosphate = beta-D-fructose 6-phosphate. It functions in the pathway carbohydrate biosynthesis; gluconeogenesis. Its pathway is carbohydrate degradation; glycolysis; D-glyceraldehyde 3-phosphate and glycerone phosphate from D-glucose: step 2/4. Functionally, catalyzes the reversible isomerization of glucose-6-phosphate to fructose-6-phosphate. This is Glucose-6-phosphate isomerase from Bartonella quintana (strain Toulouse) (Rochalimaea quintana).